We begin with the raw amino-acid sequence, 133 residues long: Mediator of RNA polymerase II transcription subunit 10 (133 aa).

Residues methionine 1 to phenylalanine 13 show a composition bias toward polar residues. Residues methionine 1 to lysine 28 form a disordered region. A compositionally biased stretch (basic and acidic residues) spans serine 15–lysine 28.

Belongs to the Mediator complex subunit 10 family. As to quaternary structure, component of the Mediator complex.

The protein localises to the nucleus. Component of the Mediator complex, a coactivator involved in the regulated transcription of nearly all RNA polymerase II-dependent genes. Mediator functions as a bridge to convey information from gene-specific regulatory proteins to the basal RNA polymerase II transcription machinery. Mediator is recruited to promoters by direct interactions with regulatory proteins and serves as a scaffold for the assembly of a functional preinitiation complex with RNA polymerase II and the general transcription factors. The polypeptide is Mediator of RNA polymerase II transcription subunit 10 (NUT2) (Phaeosphaeria nodorum (strain SN15 / ATCC MYA-4574 / FGSC 10173) (Glume blotch fungus)).